The following is a 365-amino-acid chain: tRNA/tmRNA (uracil-C(5))-methyltransferase (365 aa).

5 residues coordinate S-adenosyl-L-methionine: Q189, Y217, N222, E238, and D298. The active-site Nucleophile is the C323. The active-site Proton acceptor is E357.

It belongs to the class I-like SAM-binding methyltransferase superfamily. RNA M5U methyltransferase family. TrmA subfamily.

The enzyme catalyses uridine(54) in tRNA + S-adenosyl-L-methionine = 5-methyluridine(54) in tRNA + S-adenosyl-L-homocysteine + H(+). It carries out the reaction uridine(341) in tmRNA + S-adenosyl-L-methionine = 5-methyluridine(341) in tmRNA + S-adenosyl-L-homocysteine + H(+). Its function is as follows. Dual-specificity methyltransferase that catalyzes the formation of 5-methyluridine at position 54 (m5U54) in all tRNAs, and that of position 341 (m5U341) in tmRNA (transfer-mRNA). This is tRNA/tmRNA (uracil-C(5))-methyltransferase from Saccharophagus degradans (strain 2-40 / ATCC 43961 / DSM 17024).